Here is a 422-residue protein sequence, read N- to C-terminus: MIDLRALREDPDRLRASQRARGEDESVVDRLLDLDSRHRAALARFETLRAEQKSVGKSVSRASAEEREALLNRAKSLASEVKSAEAEAEALSDELTTLLRSVPNVVESDAPVGGVDDFVVVEEVGTPRQFDFTPRDHLELGEMLGAIDTERGAKVSGARFYFLTGVGALLELGLLNLAMQRAVANGFTPMIPPVLVKPETMDGTGFLGEHAAEVYHLPADDLYLVGTSEVPLAGYHANEILPADALPTRYIGWSSCFRREAGSYGKDTRGIIRVHQFNKVEMFVYAHPDEAHEEHLRLLAWEREMLDLIEVPYRVVDIAAGDLGTSAARKYDCEAWLPSQGRYRELTSTSNCTEFQSRRLNIRYRDTDGKPRFVATLNGTLATTRWIVAILENHQQEDGSVVVPEALRPFVGQDVLHPIAKK.

227–229 (TSE) provides a ligand contact to L-serine. ATP is bound by residues 258–260 (RRE) and Val-274. Glu-281 serves as a coordination point for L-serine. ATP is bound at residue 345 to 348 (ELTS). An L-serine-binding site is contributed by Thr-380.

It belongs to the class-II aminoacyl-tRNA synthetase family. Type-1 seryl-tRNA synthetase subfamily. Homodimer. The tRNA molecule binds across the dimer.

It is found in the cytoplasm. It catalyses the reaction tRNA(Ser) + L-serine + ATP = L-seryl-tRNA(Ser) + AMP + diphosphate + H(+). It carries out the reaction tRNA(Sec) + L-serine + ATP = L-seryl-tRNA(Sec) + AMP + diphosphate + H(+). The protein operates within aminoacyl-tRNA biosynthesis; selenocysteinyl-tRNA(Sec) biosynthesis; L-seryl-tRNA(Sec) from L-serine and tRNA(Sec): step 1/1. Catalyzes the attachment of serine to tRNA(Ser). Is also able to aminoacylate tRNA(Sec) with serine, to form the misacylated tRNA L-seryl-tRNA(Sec), which will be further converted into selenocysteinyl-tRNA(Sec). This chain is Serine--tRNA ligase, found in Thermobifida fusca (strain YX).